The chain runs to 499 residues: Probable dipeptidase B (499 aa).

C26 is a catalytic residue.

Belongs to the peptidase C69 family.

The enzyme catalyses an L-aminoacyl-L-amino acid + H2O = 2 an L-alpha-amino acid. This is Probable dipeptidase B (pepDB) from Streptococcus pyogenes serotype M18 (strain MGAS8232).